The sequence spans 292 residues: Transmembrane and ubiquitin-like domain-containing protein 1 (292 aa).

Residues V11 to T31 form a helical membrane-spanning segment. The disordered stretch occupies residues V34–S143. A compositionally biased stretch (basic and acidic residues) spans V71–P80. The segment covering A84–S94 has biased composition (low complexity). Positions M149–T222 constitute a Ubiquitin-like domain. 2 helical membrane-spanning segments follow: residues V237–W257 and A269–V289.

It is found in the membrane. The protein localises to the cytoplasm. It localises to the nucleus. Functionally, may contribute to the regulation of translation during cell-cycle progression. May contribute to the regulation of cell proliferation. The membrane form is involved in sterol-regulated ubiquitination and degradation of HMG-CoA reductase HMGCR. May be involved in centrosome assembly. The polypeptide is Transmembrane and ubiquitin-like domain-containing protein 1 (tmub1) (Danio rerio (Zebrafish)).